The sequence spans 204 residues: ATP-dependent Clp protease proteolytic subunit (204 aa).

Residue Ser-101 is the Nucleophile of the active site. His-126 is an active-site residue.

The protein belongs to the peptidase S14 family. In terms of assembly, fourteen ClpP subunits assemble into 2 heptameric rings which stack back to back to give a disk-like structure with a central cavity, resembling the structure of eukaryotic proteasomes.

Its subcellular location is the cytoplasm. The catalysed reaction is Hydrolysis of proteins to small peptides in the presence of ATP and magnesium. alpha-casein is the usual test substrate. In the absence of ATP, only oligopeptides shorter than five residues are hydrolyzed (such as succinyl-Leu-Tyr-|-NHMec, and Leu-Tyr-Leu-|-Tyr-Trp, in which cleavage of the -Tyr-|-Leu- and -Tyr-|-Trp bonds also occurs).. Cleaves peptides in various proteins in a process that requires ATP hydrolysis. Has a chymotrypsin-like activity. Plays a major role in the degradation of misfolded proteins. This Deinococcus radiodurans (strain ATCC 13939 / DSM 20539 / JCM 16871 / CCUG 27074 / LMG 4051 / NBRC 15346 / NCIMB 9279 / VKM B-1422 / R1) protein is ATP-dependent Clp protease proteolytic subunit.